Reading from the N-terminus, the 352-residue chain is Chorismate synthase (352 aa).

Arginine 48 is an NADP(+) binding site. Residues 125–127, 238–239, glycine 278, 293–297, and arginine 319 each bind FMN; these read RSS, NA, and KPTSS.

The protein belongs to the chorismate synthase family. In terms of assembly, homotetramer. The cofactor is FMNH2.

The catalysed reaction is 5-O-(1-carboxyvinyl)-3-phosphoshikimate = chorismate + phosphate. Its pathway is metabolic intermediate biosynthesis; chorismate biosynthesis; chorismate from D-erythrose 4-phosphate and phosphoenolpyruvate: step 7/7. Catalyzes the anti-1,4-elimination of the C-3 phosphate and the C-6 proR hydrogen from 5-enolpyruvylshikimate-3-phosphate (EPSP) to yield chorismate, which is the branch point compound that serves as the starting substrate for the three terminal pathways of aromatic amino acid biosynthesis. This reaction introduces a second double bond into the aromatic ring system. This is Chorismate synthase from Legionella pneumophila subsp. pneumophila (strain Philadelphia 1 / ATCC 33152 / DSM 7513).